Consider the following 101-residue polypeptide: Small ribosomal subunit protein uS14 (101 aa).

Residues 1–10 (MAKKSSVEKN) are compositionally biased toward basic and acidic residues. A disordered region spans residues 1 to 23 (MAKKSSVEKNNRRKRMAKNAAPK). The span at 11–23 (NRRKRMAKNAAPK) shows a compositional bias: basic residues.

Belongs to the universal ribosomal protein uS14 family. Part of the 30S ribosomal subunit. Contacts proteins S3 and S10.

Functionally, binds 16S rRNA, required for the assembly of 30S particles and may also be responsible for determining the conformation of the 16S rRNA at the A site. The chain is Small ribosomal subunit protein uS14 from Bradyrhizobium sp. (strain BTAi1 / ATCC BAA-1182).